The sequence spans 254 residues: Imidazole glycerol phosphate synthase subunit HisF (254 aa).

Catalysis depends on residues Asp11 and Asp130.

Belongs to the HisA/HisF family. In terms of assembly, heterodimer of HisH and HisF.

The protein localises to the cytoplasm. The catalysed reaction is 5-[(5-phospho-1-deoxy-D-ribulos-1-ylimino)methylamino]-1-(5-phospho-beta-D-ribosyl)imidazole-4-carboxamide + L-glutamine = D-erythro-1-(imidazol-4-yl)glycerol 3-phosphate + 5-amino-1-(5-phospho-beta-D-ribosyl)imidazole-4-carboxamide + L-glutamate + H(+). Its pathway is amino-acid biosynthesis; L-histidine biosynthesis; L-histidine from 5-phospho-alpha-D-ribose 1-diphosphate: step 5/9. In terms of biological role, IGPS catalyzes the conversion of PRFAR and glutamine to IGP, AICAR and glutamate. The HisF subunit catalyzes the cyclization activity that produces IGP and AICAR from PRFAR using the ammonia provided by the HisH subunit. In Acidiphilium cryptum (strain JF-5), this protein is Imidazole glycerol phosphate synthase subunit HisF.